The primary structure comprises 213 residues: Thiopurine S-methyltransferase (213 aa).

Positions 10, 45, 66, and 120 each coordinate S-adenosyl-L-methionine.

Belongs to the class I-like SAM-binding methyltransferase superfamily. TPMT family.

The protein resides in the cytoplasm. It carries out the reaction S-adenosyl-L-methionine + a thiopurine = S-adenosyl-L-homocysteine + a thiopurine S-methylether.. This Photobacterium profundum (strain SS9) protein is Thiopurine S-methyltransferase.